A 105-amino-acid polypeptide reads, in one-letter code: Pyrimidine/purine nucleoside phosphorylase (105 aa).

This sequence belongs to the nucleoside phosphorylase PpnP family.

The catalysed reaction is a purine D-ribonucleoside + phosphate = a purine nucleobase + alpha-D-ribose 1-phosphate. It catalyses the reaction adenosine + phosphate = alpha-D-ribose 1-phosphate + adenine. It carries out the reaction cytidine + phosphate = cytosine + alpha-D-ribose 1-phosphate. The enzyme catalyses guanosine + phosphate = alpha-D-ribose 1-phosphate + guanine. The catalysed reaction is inosine + phosphate = alpha-D-ribose 1-phosphate + hypoxanthine. It catalyses the reaction thymidine + phosphate = 2-deoxy-alpha-D-ribose 1-phosphate + thymine. It carries out the reaction uridine + phosphate = alpha-D-ribose 1-phosphate + uracil. The enzyme catalyses xanthosine + phosphate = alpha-D-ribose 1-phosphate + xanthine. In terms of biological role, catalyzes the phosphorolysis of diverse nucleosides, yielding D-ribose 1-phosphate and the respective free bases. Can use uridine, adenosine, guanosine, cytidine, thymidine, inosine and xanthosine as substrates. Also catalyzes the reverse reactions. This chain is Pyrimidine/purine nucleoside phosphorylase, found in Delftia acidovorans (strain DSM 14801 / SPH-1).